The primary structure comprises 183 residues: Translation initiation factor IF-3 (183 aa).

The protein belongs to the IF-3 family. In terms of assembly, monomer.

Its subcellular location is the cytoplasm. Its function is as follows. IF-3 binds to the 30S ribosomal subunit and shifts the equilibrium between 70S ribosomes and their 50S and 30S subunits in favor of the free subunits, thus enhancing the availability of 30S subunits on which protein synthesis initiation begins. The chain is Translation initiation factor IF-3 from Aliivibrio salmonicida (strain LFI1238) (Vibrio salmonicida (strain LFI1238)).